The chain runs to 142 residues: Transcriptional regulator MraZ (142 aa).

2 SpoVT-AbrB domains span residues 5–51 and 77–120; these read ASAL…PRPE and AADV…DAAT.

Belongs to the MraZ family. Forms oligomers.

It localises to the cytoplasm. Its subcellular location is the nucleoid. The chain is Transcriptional regulator MraZ from Cupriavidus taiwanensis (strain DSM 17343 / BCRC 17206 / CCUG 44338 / CIP 107171 / LMG 19424 / R1) (Ralstonia taiwanensis (strain LMG 19424)).